The chain runs to 376 residues: UPF0754 membrane protein SERP1382 (376 aa).

Transmembrane regions (helical) follow at residues 4–24 (ILLV…TNMI) and 356–376 (TLGF…AIFV).

It belongs to the UPF0754 family.

Its subcellular location is the cell membrane. The protein is UPF0754 membrane protein SERP1382 of Staphylococcus epidermidis (strain ATCC 35984 / DSM 28319 / BCRC 17069 / CCUG 31568 / BM 3577 / RP62A).